The primary structure comprises 308 residues: Protoheme IX farnesyltransferase (308 aa).

Transmembrane regions (helical) follow at residues leucine 20–isoleucine 40, alanine 50–alanine 70, asparagine 102–threonine 122, leucine 124–tryptophan 144, threonine 149–serine 169, alanine 170–threonine 190, leucine 227–glycine 249, and tyrosine 288–histidine 308.

It belongs to the UbiA prenyltransferase family. Protoheme IX farnesyltransferase subfamily.

It is found in the cell membrane. It catalyses the reaction heme b + (2E,6E)-farnesyl diphosphate + H2O = Fe(II)-heme o + diphosphate. It participates in porphyrin-containing compound metabolism; heme O biosynthesis; heme O from protoheme: step 1/1. Functionally, converts heme B (protoheme IX) to heme O by substitution of the vinyl group on carbon 2 of heme B porphyrin ring with a hydroxyethyl farnesyl side group. This is Protoheme IX farnesyltransferase from Mycobacterium tuberculosis (strain ATCC 25618 / H37Rv).